The following is a 92-amino-acid chain: Small ribosomal subunit protein uS19c (92 aa).

Belongs to the universal ribosomal protein uS19 family.

The protein resides in the plastid. It localises to the chloroplast. Its function is as follows. Protein S19 forms a complex with S13 that binds strongly to the 16S ribosomal RNA. This chain is Small ribosomal subunit protein uS19c, found in Lobularia maritima (Sweet alyssum).